We begin with the raw amino-acid sequence, 152 residues long: Histone H2B.9 (152 aa).

Basic and acidic residues-rich tracts occupy residues 1–16 (MAPK…KPAE) and 34–52 (EKRL…EGKK). The tract at residues 1 to 59 (MAPKAEKKPAAKKPAEEEPAAEKAPAAGKKPKAEKRLPAGKGEKGGAGEGKKAGRKKGK) is disordered. 2 positions are modified to N6-acetyllysine: Lys7 and Lys35. Lys148 participates in a covalent cross-link: Glycyl lysine isopeptide (Lys-Gly) (interchain with G-Cter in ubiquitin).

Belongs to the histone H2B family. The nucleosome is a histone octamer containing two molecules each of H2A, H2B, H3 and H4 assembled in one H3-H4 heterotetramer and two H2A-H2B heterodimers. The octamer wraps approximately 147 bp of DNA. Post-translationally, can be acetylated to form H2BK6ac and H2BK33ac. In terms of processing, monoubiquitinated by BRE1 to form H2BK143ub1 and deubiquitinated by UBP26. Required for heterochromatic histone H3 di- and trimethylation at H3K4me. May give a specific tag for epigenetic transcriptional activation.

The protein resides in the nucleus. The protein localises to the chromosome. Core component of nucleosome. Nucleosomes wrap and compact DNA into chromatin, limiting DNA accessibility to the cellular machineries which require DNA as a template. Histones thereby play a central role in transcription regulation, DNA repair, DNA replication and chromosomal stability. DNA accessibility is regulated via a complex set of post-translational modifications of histones, also called histone code, and nucleosome remodeling. The sequence is that of Histone H2B.9 (H2B.9) from Oryza sativa subsp. indica (Rice).